Reading from the N-terminus, the 180-residue chain is ATP synthase subunit delta (180 aa).

Belongs to the ATPase delta chain family. As to quaternary structure, F-type ATPases have 2 components, F(1) - the catalytic core - and F(0) - the membrane proton channel. F(1) has five subunits: alpha(3), beta(3), gamma(1), delta(1), epsilon(1). F(0) has three main subunits: a(1), b(2) and c(10-14). The alpha and beta chains form an alternating ring which encloses part of the gamma chain. F(1) is attached to F(0) by a central stalk formed by the gamma and epsilon chains, while a peripheral stalk is formed by the delta and b chains.

It localises to the cell inner membrane. In terms of biological role, f(1)F(0) ATP synthase produces ATP from ADP in the presence of a proton or sodium gradient. F-type ATPases consist of two structural domains, F(1) containing the extramembraneous catalytic core and F(0) containing the membrane proton channel, linked together by a central stalk and a peripheral stalk. During catalysis, ATP synthesis in the catalytic domain of F(1) is coupled via a rotary mechanism of the central stalk subunits to proton translocation. This protein is part of the stalk that links CF(0) to CF(1). It either transmits conformational changes from CF(0) to CF(1) or is implicated in proton conduction. This is ATP synthase subunit delta from Legionella pneumophila (strain Paris).